Reading from the N-terminus, the 761-residue chain is Zinc finger protein 711 (761 aa).

Residues lysine 224, lysine 235, and lysine 296 each participate in a glycyl lysine isopeptide (Lys-Gly) (interchain with G-Cter in SUMO2) cross-link. C2H2-type zinc fingers lie at residues 383–408 (YPCH…HPDH), 414–436 (YQCT…LESH), 476–499 (HKCK…LAVH), 505–527 (HVCV…MRTH), and 533–556 (YQCQ…KSKH). The tract at residues 515–761 (RHPSELKKHM…IMRHHKEALM (247 aa)) is required for transcriptional activation. A C2H2-type 6; atypical zinc finger spans residues 562–584 (YKCEHCPQAFGDERELQRHLDLF). Zn(2+) contacts are provided by cysteine 564, cysteine 567, and histidine 580. C2H2-type zinc fingers lie at residues 590-613 (HQCP…ISVH), 619-641 (HKCE…SDIH), 647-670 (HQCR…LSVH), 676-698 (LKCK…MKTH), 704-727 (YQCE…ISIH), and 733-755 (HRCE…IMRH).

The protein belongs to the krueppel C2H2-type zinc-finger protein family. In terms of assembly, interacts with PHF8. Expressed in neural tissues.

The protein localises to the nucleus. In terms of biological role, transcription regulator required for brain development. Probably acts as a transcription factor that binds to the promoter of target genes and recruits PHF8 histone demethylase, leading to activated expression of genes involved in neuron development, such as KDM5C. May compete with transcription factor ARX for activation of expression of KDM5C. This Homo sapiens (Human) protein is Zinc finger protein 711 (ZNF711).